The primary structure comprises 79 residues: Major outer membrane lipoprotein Lpp 2 (79 aa).

Positions 1–21 are cleaved as a signal peptide; it reads MNRTNQLILGAVVLGSTLLAG. Residue Cys22 is the site of N-palmitoyl cysteine attachment. Cys22 is lipidated: S-diacylglycerol cysteine. 2 repeats span residues 25 to 35 and 39 to 49; these read NAKIDQLSSDV and SAKVEQLSNDV. Positions 28 to 69 form a coiled coil; the sequence is IDQLSSDVQTLSAKVEQLSNDVNAMRSDVQAAKDDAARANQR. N6-murein peptidoglycan lysine is present on Lys79.

This sequence belongs to the Lpp family. As to quaternary structure, homotrimer.

It localises to the cell outer membrane. The protein resides in the secreted. It is found in the cell wall. In terms of biological role, plays an important role in virulence. A highly abundant outer membrane lipoprotein that controls the distance between the inner and outer membranes. The only protein known to be covalently linked to the peptidoglycan network (PGN). Also non-covalently binds the PGN. The link between the cell outer membrane and PGN contributes to maintenance of the structural and functional integrity of the cell envelope, and maintains the correct distance between the PGN and the outer membrane. This Salmonella typhimurium (strain LT2 / SGSC1412 / ATCC 700720) protein is Major outer membrane lipoprotein Lpp 2.